A 62-amino-acid polypeptide reads, in one-letter code: Disintegrin schistatin-like subunit A (62 aa).

One can recognise a Disintegrin domain in the interval S1 to N62. Cystine bridges form between C5–C28, C19–C25, C24–C49, and C37–C56. The short motif at R41–D43 is the Cell attachment site element.

Belongs to the disintegrin family. Dimeric disintegrin subfamily. In terms of assembly, heterodimer with subunit B; disulfide-linked. Expressed by the venom gland.

The protein localises to the secreted. In terms of biological role, may bind to both alpha-IIb/beta-3 (ITGA2B/ITGB3) and alpha-V/beta-3 (ITGAV/ITGB3) integrins, and may inhibit platelet aggregation. The polypeptide is Disintegrin schistatin-like subunit A (Echis carinatus (Saw-scaled viper)).